The chain runs to 277 residues: Undecaprenyl-diphosphatase 2 (277 aa).

6 helical membrane passes run 43 to 63, 87 to 107, 109 to 129, 183 to 203, 214 to 234, and 254 to 274; these read RAMA…VWEF, LLIA…TIHE, LFNP…MLWA, AATE…AVYS, SDLP…MIAV, and IAFG…WTAA.

Belongs to the UppP family.

It localises to the cell inner membrane. The enzyme catalyses di-trans,octa-cis-undecaprenyl diphosphate + H2O = di-trans,octa-cis-undecaprenyl phosphate + phosphate + H(+). In terms of biological role, catalyzes the dephosphorylation of undecaprenyl diphosphate (UPP). Confers resistance to bacitracin. The protein is Undecaprenyl-diphosphatase 2 of Pseudomonas fluorescens (strain Pf0-1).